The sequence spans 393 residues: tRNA(Met) cytidine acetate ligase (393 aa).

Residues glycine 81, asparagine 142, and arginine 167 each contribute to the ATP site.

It belongs to the TmcAL family.

The protein localises to the cytoplasm. The enzyme catalyses cytidine(34) in elongator tRNA(Met) + acetate + ATP = N(4)-acetylcytidine(34) in elongator tRNA(Met) + AMP + diphosphate. Its function is as follows. Catalyzes the formation of N(4)-acetylcytidine (ac(4)C) at the wobble position of elongator tRNA(Met), using acetate and ATP as substrates. First activates an acetate ion to form acetyladenylate (Ac-AMP) and then transfers the acetyl group to tRNA to form ac(4)C34. This chain is tRNA(Met) cytidine acetate ligase, found in Bacillus cereus (strain Q1).